Consider the following 173-residue polypeptide: Chorion protein S19 (173 aa).

Residues 1–21 (MNKFATLAVIFCACIVGSCYA) form the signal peptide.

It belongs to the chorion protein S19 family.

The protein localises to the secreted. Functionally, chorion membrane (egg shell) protein; plays a role in protecting the egg from the environment. This is Chorion protein S19 (Cp19) from Drosophila melanogaster (Fruit fly).